The sequence spans 242 residues: Zinc finger protein ZOP1 (242 aa).

The Matrin-type zinc-finger motif lies at 11 to 42; sequence KWCEFCKIWIQNNPTSIRNHDLGKRHRECVDK. Residues 42–71 are a coiled coil; it reads KKLTDMRERSAAKDKELKKNEKLLQQIEAK. The segment at 154–242 is disordered; it reads VKKPVSSSGA…PLLGLYNRPF (89 aa). Low complexity predominate over residues 155–172; it reads KKPVSSSGAGPSVGKPPG. Over residues 201 to 233 the composition is skewed to basic and acidic residues; sequence RQDEKPKKVSAEEKAALKAREAARKRVEDREKP.

As to quaternary structure, component of a pre-mRNA splicing complex. Interacts with STA1. Interacts with PRP31.

It is found in the nucleus. The protein localises to the cajal body. In terms of biological role, nucleic acid-binding protein that promotes Pol IV-dependent small interfering RNA (siRNA) accumulation, DNA methylation and transcriptional silencing. May possess both RNA-directed DNA methylation (RdDM)-dependent and -independent roles in transcriptional silencing. Acts as a pre-mRNA splicing factor that associates with several typical components of the splicing machinery as well as with Pol II. This is Zinc finger protein ZOP1 from Arabidopsis thaliana (Mouse-ear cress).